The sequence spans 568 residues: U6 small nuclear RNA (adenine-(43)-N(6))-methyltransferase (568 aa).

The segment at 1–20 (MSEIDTNDIKKEMDNKNYRD) is disordered. A compositionally biased stretch (basic and acidic residues) spans 7-20 (NDIKKEMDNKNYRD). Positions 117, 151, 175, and 250 each coordinate S-adenosyl-L-methionine. Disordered regions lie at residues 363-383 (KENNNINNNNNNNNNNNINNN), 403-431 (NLDSDDNNNNNNNNNNNNNNNNNNNNNNN), and 503-538 (DPKINNNNNNNNNNNNNNNNNNNNNNNNNNNNNKNN). 3 stretches are compositionally biased toward low complexity: residues 365–383 (NNNINNNNNNNNNNNINNN), 409–431 (NNNNNNNNNNNNNNNNNNNNNNN), and 507–538 (NNNNNNNNNNNNNNNNNNNNNNNNNNNNNKNN).

It belongs to the methyltransferase superfamily. METTL16/RlmF family.

The catalysed reaction is adenosine in U6 snRNA + S-adenosyl-L-methionine = N(6)-methyladenosine in U6 snRNA + S-adenosyl-L-homocysteine + H(+). Functionally, RNA N6-methyltransferase that mediates N6-methylation of adenine of U6 small nuclear RNA (U6 snRNA). The sequence is that of U6 small nuclear RNA (adenine-(43)-N(6))-methyltransferase from Dictyostelium discoideum (Social amoeba).